Reading from the N-terminus, the 353-residue chain is Melanin-concentrating hormone receptor 1 (353 aa).

A disordered region spans residues 1 to 28; sequence MDLEASLLPTGPNASNTSDGPDNLTSAG. Topologically, residues 1–45 are extracellular; that stretch reads MDLEASLLPTGPNASNTSDGPDNLTSAGPPPRTGSISYVNIIMPS. The segment covering 12–26 has biased composition (polar residues); that stretch reads PNASNTSDGPDNLTS. Residues Asn13, Asn16, and Asn23 are each glycosylated (N-linked (GlcNAc...) asparagine). Residues 46–66 traverse the membrane as a helical segment; the sequence is VFGTICLLGIIGNSMVIFAVV. Residues 67 to 79 are Cytoplasmic-facing; that stretch reads KKSKLHWFSNVPD. The chain crosses the membrane as a helical span at residues 80–100; sequence IFIINLSVVDLLFLLGMPFMI. Residues 101–116 lie on the Extracellular side of the membrane; the sequence is HQLMGNGVWHFGETMC. A disulfide bond links Cys116 and Cys194. Residues 117-139 form a helical membrane-spanning segment; sequence TLITAMDANSQFTSTYILTAMAI. At 140–161 the chain is on the cytoplasmic side; that stretch reads DRYLATVHPISSTRFRKPSVAT. The chain crosses the membrane as a helical span at residues 162 to 182; that stretch reads LVICLLWALSIISITPVWLYA. Residues 183–204 are Extracellular-facing; sequence RLIPFPGGTVGCGIRLPNPDTD. Residues 205–225 form a helical membrane-spanning segment; sequence LYWFTLYQFFLAFALPFVVIT. At 226–256 the chain is on the cytoplasmic side; the sequence is AAYVRILQRMTSSVAPASQRSIRLRTKRVTR. Residues 257–277 traverse the membrane as a helical segment; sequence TAIAICLVFFVCWAPYYVLQL. Residues 278–294 lie on the Extracellular side of the membrane; the sequence is TQLSISRPTLTFVYLYN. The helical transmembrane segment at 295–315 threads the bilayer; that stretch reads AAISLGYANSCLNPFVYIVLC. Topologically, residues 316–353 are cytoplasmic; sequence ETFRKRLVLSVKPAAQGQLRAVSNAQTAEEERTESKGT.

The protein belongs to the G-protein coupled receptor 1 family. Interacts with NCDN.

Its subcellular location is the cell membrane. Its function is as follows. Receptor for melanin-concentrating hormone, coupled to both G proteins that inhibit adenylyl cyclase and G proteins that activate phosphoinositide hydrolysis. This is Melanin-concentrating hormone receptor 1 from Sus scrofa (Pig).